A 473-amino-acid polypeptide reads, in one-letter code: 6-phosphogluconate dehydrogenase, decarboxylating (473 aa).

NADP(+) contacts are provided by residues 10-15 (GMAVMG), 33-35 (NRT), 74-76 (VKS), and N102. Substrate-binding positions include N102 and 128 to 130 (SGG). K182 serves as the catalytic Proton acceptor. Substrate is bound at residue 185–186 (HN). E189 acts as the Proton donor in catalysis. Residues Y190, K260, R287, R446, and H452 each coordinate substrate.

This sequence belongs to the 6-phosphogluconate dehydrogenase family. In terms of assembly, homodimer.

The catalysed reaction is 6-phospho-D-gluconate + NADP(+) = D-ribulose 5-phosphate + CO2 + NADPH. Its pathway is carbohydrate degradation; pentose phosphate pathway; D-ribulose 5-phosphate from D-glucose 6-phosphate (oxidative stage): step 3/3. In terms of biological role, catalyzes the oxidative decarboxylation of 6-phosphogluconate to ribulose 5-phosphate and CO(2), with concomitant reduction of NADP to NADPH. The protein is 6-phosphogluconate dehydrogenase, decarboxylating (gnd) of Buchnera aphidicola subsp. Schizaphis graminum (strain Sg).